Here is a 497-residue protein sequence, read N- to C-terminus: Probable cytosol aminopeptidase (497 aa).

Mn(2+) contacts are provided by lysine 263 and aspartate 268. The active site involves lysine 275. Mn(2+) is bound by residues aspartate 286, aspartate 345, and glutamate 347. Residue arginine 349 is part of the active site.

The protein belongs to the peptidase M17 family. It depends on Mn(2+) as a cofactor.

Its subcellular location is the cytoplasm. It carries out the reaction Release of an N-terminal amino acid, Xaa-|-Yaa-, in which Xaa is preferably Leu, but may be other amino acids including Pro although not Arg or Lys, and Yaa may be Pro. Amino acid amides and methyl esters are also readily hydrolyzed, but rates on arylamides are exceedingly low.. The catalysed reaction is Release of an N-terminal amino acid, preferentially leucine, but not glutamic or aspartic acids.. Presumably involved in the processing and regular turnover of intracellular proteins. Catalyzes the removal of unsubstituted N-terminal amino acids from various peptides. In Brucella suis biovar 1 (strain 1330), this protein is Probable cytosol aminopeptidase.